Here is a 1321-residue protein sequence, read N- to C-terminus: Multidrug resistance protein pgp-1 (1321 aa).

The Cytoplasmic segment spans residues 1-77 (MLRNGSLRQS…YTTTLEKLLL (77 aa)). An ABC transmembrane type-1 1 domain is found at 77–381 (LFIGTLVAVI…AGPQLAVLGT (305 aa)). A helical membrane pass occupies residues 78–98 (FIGTLVAVITGAGLPLMSILQ). N-linked (GlcNAc...) asparagine glycans are attached at residues asparagine 115 and asparagine 125. A helical membrane pass occupies residues 144 to 164 (AMTVGMWAAGQITVTCYLYVA). Asparagine 190 is a glycosylation site (N-linked (GlcNAc...) asparagine). Helical transmembrane passes span 213–233 (KIGMAFQYLSQFITGFIVAFT), 240–260 (LVMLAVTPIQALCGFAIAKSM), 321–341 (ISFGAMQASNFISFALAFYIG), and 350–370 (LNFGDMLTTFSSVMMGSMALG). Over 371-753 (LAGPQLAVLG…LYHARPHALS (383 aa)) the chain is Cytoplasmic. Positions 416-652 (ITVENVHFTY…QGLYYDLVTA (237 aa)) constitute an ABC transporter 1 domain. Residue 451–458 (GSSGCGKS) participates in ATP binding. A run of 2 helical transmembrane segments spans residues 754–774 (LFIGMSTATIGGFIYPTYSVF) and 798–818 (LMFLVLAAAQGICSFLMTFFM). The 290-residue stretch at 754 to 1043 (LFIGMSTATI…ATSYFPEYAK (290 aa)) folds into the ABC transmembrane type-1 2 domain. A glycan (N-linked (GlcNAc...) asparagine) is linked at asparagine 850. 4 helical membrane-spanning segments follow: residues 874 to 894 (FSTVITTLVSMVAGIGLAFFY), 895 to 915 (GWQMALLIIAILPIVAFGQYL), 978 to 998 (IQGLSYGCASSVLYLLNTCAY), and 1017 to 1037 (VLRVMYAITISTSTLGFATSY). Residues 1038 to 1321 (FPEYAKATFA…LTQKQMTEKK (284 aa)) are Cytoplasmic-facing. In terms of domain architecture, ABC transporter 2 spans 1077–1315 (VIFKNVRFAY…KGAYYKLTQK (239 aa)). 1112 to 1119 (GPSGCGKS) contributes to the ATP binding site.

The protein belongs to the ABC transporter superfamily. ABCB family. Multidrug resistance exporter (TC 3.A.1.201) subfamily. In terms of tissue distribution, intestinal cells.

It localises to the membrane. It carries out the reaction ATP + H2O + xenobioticSide 1 = ADP + phosphate + xenobioticSide 2.. Its function is as follows. Energy-dependent efflux pump responsible for decreased drug accumulation in multidrug-resistant cells. The chain is Multidrug resistance protein pgp-1 (pgp-1) from Caenorhabditis elegans.